The primary structure comprises 851 residues: MINTETFDTHTPMMQQYLRLKAQHPDILLFYRMGDFYELFYDDAKKAAKLLDISLTKRGQSAGNPIPMAGVPHHAVENYLAKLVQLGESVAICEQIGDPATSKGPVERKVVRIVTPGTVTDEALLQERQDNLLAAIWHDNQGFGYATLDVTSGRFQISEMIELETIAAELQRSRPVELLYPESFEHMALIENFHGLRRRPLWEFELDTAKQQLNLQFGTRDLVGFGVDKATLALRAAGCLLQYVKDTQRTALPHIRGITMERQQDTVIMDAATRRNLELTQNLSGSTDNTLASVLDLCVTPMGSRMLKRWLHAPVRDRQILENRQQAIATLQEIGLELQPFLLQIGDLERVLARLALRSARPRDLARMRHAFQQLPDIHQVMDSSDSPYIKQLQKNIGRFDELQELLEKAIVETPPVLIRDGGVIAPGYNSELDEWRTLADGASNYLEQLEIREREKLGLDTLKVGFNGVHGYYIQVSRGQSHLVPIHYVRRQTLKNAERYIIPELKEYEDKVLTSKGKSLAIEKALYEELFDLLLPHLAELQTSAEALAELDVLANLAERAETLNYICPTLSDKPGIQITGGRHPVVEQVLREPFISNPLSLSSQRRLLIITGPNMGGKSTYMRQAALITLLAYIGSFVPAEKAVIGPVDRIFTRVGASDDLASGRSTFMVEMTETANILHNATEQSLVLMDEIGRGTSTYDGLSLAWACAENLANRIKAMTLFATHYFELTTLPEKLEGVVNIHLDAVEHGDTIAFMHSVQEGAASKSYGLAVASLAGVPREVIKRARQKLKELESLSNHATASHVDTPQLALLTEETSPAVEALENLNPDSLTPRQALEWIYRLKDMV.

An ATP-binding site is contributed by 614 to 621 (GPNMGGKS).

It belongs to the DNA mismatch repair MutS family.

In terms of biological role, this protein is involved in the repair of mismatches in DNA. It is possible that it carries out the mismatch recognition step. This protein has a weak ATPase activity. The sequence is that of DNA mismatch repair protein MutS from Photorhabdus laumondii subsp. laumondii (strain DSM 15139 / CIP 105565 / TT01) (Photorhabdus luminescens subsp. laumondii).